The following is a 630-amino-acid chain: MATRPGPLTEWPWQWMGGYKYLVLAPVAMHTAHRLATKGWGDFDPAYTFMLPTLLLRMIHNQIWISLSRYQTARRKHLIVDRSLDFEQVDRVLYLDDQIILNGLLFYLGYAIIPNFRLMPVWRTNGALITILLHMGPVEFLYYWFHRALHHHFLYSRYHSHHHASIVTEPITSVIHPFAEHLAYFLLFSISILPPIFMGCGSVLAGVLYITYIDFMNNMGHCNFELMPKWMFQTFPPLKYLIYTPSFHSLHHTQFRTNYSLFMPFYDYIYNTMDSSSDELYERSLKGTEETPDIVHLTHMTSLKSTYHLRIGITSISSKPCNDSVWYMWMLWPVAWLSMVLAWIYGSSAFVVERLKLKKFSMQVWALPRYNFQVMDSSALGKVSPSTILIEKAILDANEKGVKVLSLGLLNQAEQLNGSGELFAKKYPRLRVRLIDGSGLATAVVLNSIPFGTKQVFLCGSNSKVTRATAIALCQRGVQVILNQEKEYGMLKSRVPESRAIYLKFSNDETPQIWIGDSIDDAQGRAPKGTIFIPTSQFPLKKARKDCTYLSNPAMKIPETMQNVHTCENWLPRRVMSAWRIAGILHALEGWEMHECGDDMMTIEKTWSAAIKHGFKPLTKPCSLNSGTDL.

4 helical membrane passes run 93 to 113 (LYLD…YAII), 126 to 146 (GALI…YWFH), 185 to 205 (FLLF…SVLA), and 325 to 345 (VWYM…AWIY). The Fatty acid hydroxylase domain maps to 133–272 (LHMGPVEFLY…MPFYDYIYNT (140 aa)).

It belongs to the sterol desaturase family. Homodimer. As to expression, expressed in panicles at low levels.

The protein localises to the endoplasmic reticulum membrane. It catalyses the reaction a long-chain fatty aldehyde + 2 NADPH + O2 + H(+) = a long-chain alkane + formate + 2 NADP(+) + H2O. Functionally, aldehyde decarbonylase involved in the conversion of aldehydes to alkanes. Core component of a very-long-chain alkane synthesis complex. The protein is Very-long-chain aldehyde decarbonylase GL1-7 of Oryza sativa subsp. japonica (Rice).